The sequence spans 115 residues: U3-lycotoxin-Ls1n (115 aa).

The first 20 residues, 1–20 (MKFVLLFGVLLVTLFSYSSA), serve as a signal peptide directing secretion. Residues 21 to 44 (EMLDDFDQADEDELLSLIEKEEAR) constitute a propeptide that is removed on maturation. Disulfide bonds link cysteine 48-cysteine 63, cysteine 55-cysteine 72, cysteine 62-cysteine 87, and cysteine 74-cysteine 85.

The protein belongs to the neurotoxin 19 (CSTX) family. 01 subfamily. As to expression, expressed by the venom gland.

Its subcellular location is the secreted. The protein is U3-lycotoxin-Ls1n of Lycosa singoriensis (Wolf spider).